We begin with the raw amino-acid sequence, 444 residues long: UPF0053 protein YhdP (444 aa).

Positions 1-201 (MDIVNLILVA…YKSGEINQSE (201 aa)) constitute a CNNM transmembrane domain. Helical transmembrane passes span 7–27 (ILVA…FAII), 61–81 (ACQL…ESTI), and 101–121 (VISF…VGEL). CBS domains are found at residues 220–282 (MIPR…SVDS) and 284–344 (ISQF…IRDE).

The protein belongs to the UPF0053 family.

It localises to the cell membrane. In Bacillus subtilis (strain 168), this protein is UPF0053 protein YhdP (yhdP).